A 309-amino-acid chain; its full sequence is Thioesterase lcsJ (309 aa).

Residues 11–31 (IAQVHGFVFSWWGVILLLAII) traverse the membrane as a helical segment. Residues 61-83 (ASPTAENAQRRVPKTPKTGATDT) form a disordered region. N-linked (GlcNAc...) asparagine glycosylation occurs at asparagine 112. The segment at 239–275 (SGWIPPRPESTGNSKSLDSLQANGHGATENGKHDAKD) is disordered. Over residues 248–260 (STGNSKSLDSLQA) the composition is skewed to polar residues.

It belongs to the lcsJ thioesterase family.

Its subcellular location is the membrane. Its pathway is secondary metabolite biosynthesis. Functionally, thioesterase; part of the gene cluster that mediates the biosynthesis of the lipopeptide antibiotics leucinostatins that show extensive biological activities, including antimalarial, antiviral, antibacterial, antifungal, and antitumor activities, as well as phytotoxic. Leucinostatin A contains nine amino acid residues, including the unusual amino acid 4-methyl-L-proline (MePro), 2-amino-6-hydroxy-4-methyl-8-oxodecanoic acid (AHyMeOA), 3-hydroxyleucine (HyLeu), alpha-aminoisobutyric acid (AIB), beta-Ala, a 4-methylhex-2-enoic acid at the N-terminus as well as a N1,N1-dimethylpropane-1,2-diamine (DPD) at the C-terminus. The biosynthesis of leucinostatins is probably initiated with the assembly of 4-methylhex-2-enoic acid by a reducing PKS. Two reducing polyketide synthases, lcsB and lcsC, have been identified in the cluster and it is not clear which is the one that assembles 4-methylhex-2-enoic acid since both contain KS, AT, DH, cMT, ER, KR and ACP domains. The polyketide residue might be transferred to the NRPS lcsA, mediated by two additional enzymes, the acyl-CoA ligase lcsD and the thioesterase lcsE. The linear polyketide carboxylic acid, which is released from PKS, is converted to a CoA thioester by lcsD, and then lcsE hydrolyzes the thiol bond and shuttles the polyketide intermediate to lcsA. The C domain of the first module catalyzed the condensation of 4-methylhex-2-enoic acid and MePro carried by domain A1, followed by successive condensations of nine amino acids to trigger the elongation of the linear peptide. A5 and A6 domains of lcsA are proposed to incorporate leucine, A2 AHyMeOA, and A3 incorporates HyLeu. A4, A7 and A8 incorporate AIB. The AHyMeOA in leucinostatin A activated by the A2 might be produced by the second PKS (lcsB or lcsC) present within the cluster. The MePro is probably produced via leucine cyclization and may originate from a separate pathway, independent of the cluster. Another nonproteinogenic amino acid, beta-Ala, could be produced by an aspartic acid decarboxylase also localized outside of the cluster. Two candidates are VFPBJ_01400 and VFPBJ_10476. The final peptide scaffold may be released by the NAD(P)H-dependent thioester reductase (TE) at the C-terminal region of lcsA. Transamination of the lcsA product by the transaminase lcsP may produce DPD at the C-terminus. Further hydroxylation steps performed alternatively by the cytochrome P450 monooxygenases lcsI, lcsK and lcsN then yield the non-methylated leucinostatins precursor. It is also possible that leucines can be hydroxylated prior to their incorporation into the peptide. Varying extents of methylation then lead to the formation of leucinostatins A and B. This is Thioesterase lcsJ from Purpureocillium lilacinum (Paecilomyces lilacinus).